We begin with the raw amino-acid sequence, 317 residues long: Tumor necrosis factor ligand superfamily member 11 (317 aa).

Positions 1-16 (MRRASRDYTKYLRGSE) are enriched in basic and acidic residues. The disordered stretch occupies residues 1–43 (MRRASRDYTKYLRGSEEMGGGPGAPHEGPLHAPPPPAPHQPPA). Residues 1 to 47 (MRRASRDYTKYLRGSEEMGGGPGAPHEGPLHAPPPPAPHQPPAASRS) are Cytoplasmic-facing. Pro residues predominate over residues 31-41 (HAPPPPAPHQP). A helical; Signal-anchor for type II membrane protein membrane pass occupies residues 48–68 (MFVALLGLGLGQVVCSVALFF). The Extracellular segment spans residues 69–317 (YFRAQMDPNR…FGAFKVRDID (249 aa)). The THD domain maps to 164–313 (PFAHLTINAT…DATYFGAFKV (150 aa)). N-linked (GlcNAc...) asparagine glycosylation is found at Asn171 and Asn198.

Belongs to the tumor necrosis factor family. Homotrimer. Interacts with TNFRSF11B. Interacts with TNFRSF11A. Interacts with FBN1 (via N-terminal domain) in a Ca(+2)-dependent manner. Interacts with TNFAIP6 (via both Link and CUB domains). The soluble form of isoform 1 derives from the membrane form by proteolytic processing. The cleavage may be catalyzed by ADAM17. Highest in the peripheral lymph nodes, weak in spleen, peripheral blood Leukocytes, bone marrow, heart, placenta, skeletal muscle, stomach and thyroid.

The protein localises to the cell membrane. Its subcellular location is the cytoplasm. It is found in the secreted. In terms of biological role, cytokine that binds to TNFRSF11B/OPG and to TNFRSF11A/RANK. Osteoclast differentiation and activation factor. Augments the ability of dendritic cells to stimulate naive T-cell proliferation. May be an important regulator of interactions between T-cells and dendritic cells and may play a role in the regulation of the T-cell-dependent immune response. May also play an important role in enhanced bone-resorption in humoral hypercalcemia of malignancy. Induces osteoclastogenesis by activating multiple signaling pathways in osteoclast precursor cells, chief among which is induction of long lasting oscillations in the intracellular concentration of Ca (2+) resulting in the activation of NFATC1, which translocates to the nucleus and induces osteoclast-specific gene transcription to allow differentiation of osteoclasts. During osteoclast differentiation, in a TMEM64 and ATP2A2-dependent manner induces activation of CREB1 and mitochondrial ROS generation necessary for proper osteoclast generation. The protein is Tumor necrosis factor ligand superfamily member 11 (TNFSF11) of Homo sapiens (Human).